We begin with the raw amino-acid sequence, 177 residues long: MPIKSRIRSIPDYPKKGILFRDITTLIKDPVGFRLVIDSLTQHYLQEGMDFDVIVGIEARGFIIGGALSYALGKGFIPVRKPGKLPADVVSQEYQLEYGSDTIEIHVDALVAGQKVLLVDDLLATGGTALAAAALVEKVGGIVAEMAFIVNLPDIGGERKILEKGYSIYSLTDFEGE.

Belongs to the purine/pyrimidine phosphoribosyltransferase family. Homodimer.

The protein localises to the cytoplasm. The catalysed reaction is AMP + diphosphate = 5-phospho-alpha-D-ribose 1-diphosphate + adenine. It participates in purine metabolism; AMP biosynthesis via salvage pathway; AMP from adenine: step 1/1. Catalyzes a salvage reaction resulting in the formation of AMP, that is energically less costly than de novo synthesis. This chain is Adenine phosphoribosyltransferase, found in Pelodictyon phaeoclathratiforme (strain DSM 5477 / BU-1).